A 263-amino-acid polypeptide reads, in one-letter code: Kallikrein 1-related peptidase b27 (263 aa).

The signal sequence occupies residues 1-17 (MRFLILFLALSLGGIDA). A propeptide spans 18-24 (APPVQSR) (activation peptide). A Peptidase S1 domain is found at 25 to 260 (IIGGFKCKKN…FTSWIKDTMA (236 aa)). 5 disulfide bridges follow: cysteine 31/cysteine 175, cysteine 50/cysteine 66, cysteine 154/cysteine 221, cysteine 186/cysteine 200, and cysteine 211/cysteine 236. Histidine 65 serves as the catalytic Charge relay system. N-linked (GlcNAc...) asparagine glycans are attached at residues asparagine 69 and asparagine 105. Residue aspartate 122 is the Charge relay system of the active site. Serine 215 (charge relay system) is an active-site residue.

The protein belongs to the peptidase S1 family. Kallikrein subfamily. As to expression, expressed in testis and submaxillary gland. Not expressed in heart, brain, spleen, lung, liver, muscle, kidney and ovary. In the testis, expression localized specifically to Leydig cells in the interstitial tissues.

Its activity is regulated as follows. Strongly inhibited by protease inhibitors diisopropyl fluorophosphate, phenylmethanesulfonyl fluoride and SBTI. Its function is as follows. Serine protease with chymotrypsin-like cleavage specificity. Shows activity towards casein, gelatin, IGFBP3 and fibronectin but not towards laminin or collagens I and IV. Does not hydrolyze kininogin to release Lys-bradykinin. The protein is Kallikrein 1-related peptidase b27 (Klk1b27) of Mus musculus (Mouse).